An 853-amino-acid polypeptide reads, in one-letter code: NADH-quinone oxidoreductase subunit G 2 (853 aa).

The 2Fe-2S ferredoxin-type domain maps to 1–78 (MIKVTIDEQS…GMVVRTNTPL (78 aa)). [2Fe-2S] cluster-binding residues include Cys-34, Cys-45, Cys-48, and Cys-62. The 40-residue stretch at 78-117 (LIEETRSSMLDMLLANHPLDCPICDKGGECELQDMVMAYG) folds into the 4Fe-4S His(Cys)3-ligated-type domain. His-94, Cys-98, Cys-101, Cys-107, Cys-148, Cys-151, Cys-154, Cys-198, Cys-224, Cys-227, Cys-231, and Cys-259 together coordinate [4Fe-4S] cluster. 2 4Fe-4S ferredoxin-type domains span residues 139 to 170 (PVIIMNVNRCIQCQRCVRMCEEVVGAVALGTV) and 179 to 209 (TGFEGSLASCDQCGNCVEVCPVGALMSFPYR). The region spanning 217 to 273 (LAETDTICPHCGTGCQLTVGARKGEFMRVRSDWEHGVNRETLCVRGRFGLDFIESRD) is the 4Fe-4S Mo/W bis-MGD-type domain.

It belongs to the complex I 75 kDa subunit family. Requires [2Fe-2S] cluster as cofactor. The cofactor is [4Fe-4S] cluster.

It catalyses the reaction a quinone + NADH + 5 H(+)(in) = a quinol + NAD(+) + 4 H(+)(out). Its function is as follows. NDH-1 shuttles electrons from NADH, via FMN and iron-sulfur (Fe-S) centers, to quinones in the respiratory chain. The immediate electron acceptor for the enzyme in this species is believed to be ubiquinone. Couples the redox reaction to proton translocation (for every two electrons transferred, four hydrogen ions are translocated across the cytoplasmic membrane), and thus conserves the redox energy in a proton gradient. The chain is NADH-quinone oxidoreductase subunit G 2 (nuoG2) from Rhizobium meliloti (strain 1021) (Ensifer meliloti).